We begin with the raw amino-acid sequence, 247 residues long: 3(1)-hydroxy-L-isoleucine 4-dioxygenase (247 aa).

Positions 160, 162, and 213 each coordinate Fe cation.

Belongs to the iron/ascorbate-dependent oxidoreductase family. It depends on L-ascorbate as a cofactor. Fe(2+) is required as a cofactor.

It catalyses the reaction 3(1)-hydroxy-L-isoleucine + 2-oxoglutarate + O2 = (4S)-3(1),4-dihydroxy-L-isoleucine + succinate + CO2. Catalyzes the hydroxylation of L-4'-hydroxyisoleucine (4'-HIL) at the C-4 position to form L-4,4'-dihydroxyisoleucine (4,4'-DIHIL). Together with HilA, catalyzes the two step conversion of L-isoleucine into L-4,4'-dihydroxyisoleucine. In vitro, in the absence of HilA, can also catalyze the oxidation of L-methionine and the C-4-hydroxylation of L-leucine and L-isoleucine. In Pantoea ananatis (strain AJ13355), this protein is 3(1)-hydroxy-L-isoleucine 4-dioxygenase.